The following is a 25-amino-acid chain: Small ribosomal subunit protein eS32 (25 aa).

Positions 1 to 25 (MRAKWRKKRMRRLKRKRRKMRQRSK) are disordered.

The protein belongs to the eukaryotic ribosomal protein eS32 family. As to quaternary structure, component of the large ribosomal subunit.

It is found in the cytoplasm. Functionally, component of the small ribosomal subunit. The ribosome is a large ribonucleoprotein complex responsible for the synthesis of proteins in the cell. In Cyprinus carpio (Common carp), this protein is Small ribosomal subunit protein eS32 (rpl41).